Consider the following 76-residue polypeptide: MQLVLAAKYIGAAIATIGLLGAGIGIAIVFAALINGTSRNPSLRNTLFPFAILGFALSEATGLFCLMISFLLLYGV.

A run of 2 helical transmembrane segments spans residues 14–34 and 52–72; these read IATI…AALI and ILGF…SFLL.

The protein belongs to the ATPase C chain family. F-type ATPases have 2 components, CF(1) - the catalytic core - and CF(0) - the membrane proton channel. CF(1) has five subunits: alpha(3), beta(3), gamma(1), delta(1), epsilon(1). CF(0) has three main subunits: a, b and c.

The protein resides in the mitochondrion membrane. Its function is as follows. Mitochondrial membrane ATP synthase (F(1)F(0) ATP synthase or Complex V) produces ATP from ADP in the presence of a proton gradient across the membrane which is generated by electron transport complexes of the respiratory chain. F-type ATPases consist of two structural domains, F(1) - containing the extramembraneous catalytic core and F(0) - containing the membrane proton channel, linked together by a central stalk and a peripheral stalk. During catalysis, ATP synthesis in the catalytic domain of F(1) is coupled via a rotary mechanism of the central stalk subunits to proton translocation. Part of the complex F(0) domain. A homomeric c-ring of probably 10 subunits is part of the complex rotary element. In Wickerhamomyces canadensis (Yeast), this protein is ATP synthase subunit 9, mitochondrial (ATP9).